The following is a 254-amino-acid chain: Agamous-like MADS-box protein AGL9 homolog (254 aa).

The MADS-box domain maps to 3-57; that stretch reads RGRVELKRIENKINRQVTFAKRRNGLLKKAYELSVLCDAEVALIIFSNRGKLYEF. Residues 91–181 enclose the K-box domain; the sequence is ELSSQQEYLK…RLRLADGYQM (91 aa).

It localises to the nucleus. In terms of biological role, probable transcription factor active in inflorescence development and floral organogenesis. The protein is Agamous-like MADS-box protein AGL9 homolog (AGL9) of Sinapis alba (White mustard).